The primary structure comprises 186 residues: Large ribosomal subunit protein eL15 (186 aa).

The tract at residues 163–186 (RGLTSAGKKGRGLNKKGKGAEKVR) is disordered. Over residues 170-179 (KKGRGLNKKG) the composition is skewed to basic residues.

This sequence belongs to the eukaryotic ribosomal protein eL15 family.

The polypeptide is Large ribosomal subunit protein eL15 (Methanosphaera stadtmanae (strain ATCC 43021 / DSM 3091 / JCM 11832 / MCB-3)).